Reading from the N-terminus, the 352-residue chain is Probable dual-specificity RNA methyltransferase RlmN (352 aa).

The active-site Proton acceptor is the glutamate 93. The 234-residue stretch at 99-332 folds into the Radical SAM core domain; the sequence is TAKRLTVCVS…ATVRQTRGLD (234 aa). Residues cysteine 106 and cysteine 337 are joined by a disulfide bond. Cysteine 113, cysteine 117, and cysteine 120 together coordinate [4Fe-4S] cluster. S-adenosyl-L-methionine-binding positions include 160 to 161, serine 190, 213 to 215, and asparagine 294; these read GE and SLH. Residue cysteine 337 is the S-methylcysteine intermediate of the active site.

It belongs to the radical SAM superfamily. RlmN family. Requires [4Fe-4S] cluster as cofactor.

The protein resides in the cytoplasm. It carries out the reaction adenosine(2503) in 23S rRNA + 2 reduced [2Fe-2S]-[ferredoxin] + 2 S-adenosyl-L-methionine = 2-methyladenosine(2503) in 23S rRNA + 5'-deoxyadenosine + L-methionine + 2 oxidized [2Fe-2S]-[ferredoxin] + S-adenosyl-L-homocysteine. The catalysed reaction is adenosine(37) in tRNA + 2 reduced [2Fe-2S]-[ferredoxin] + 2 S-adenosyl-L-methionine = 2-methyladenosine(37) in tRNA + 5'-deoxyadenosine + L-methionine + 2 oxidized [2Fe-2S]-[ferredoxin] + S-adenosyl-L-homocysteine. In terms of biological role, specifically methylates position 2 of adenine 2503 in 23S rRNA and position 2 of adenine 37 in tRNAs. This is Probable dual-specificity RNA methyltransferase RlmN from Synechococcus sp. (strain JA-2-3B'a(2-13)) (Cyanobacteria bacterium Yellowstone B-Prime).